The following is a 560-amino-acid chain: Protein NRT1/ PTR FAMILY 2.5 (560 aa).

The tract at residues 1-20 (MADSKSGDTEVAHRSSDPSE) is disordered. 12 consecutive transmembrane segments (helical) span residues 34-54 (TLLG…VFLI), 77-97 (MLPV…PVIS), 101-121 (FISL…YLMP), 141-161 (ILYV…FTLA), 177-197 (FFNW…TAIV), 207-227 (LGFG…IAGV), 323-343 (AILR…PVAV), 372-392 (VIVL…IYPM), 404-424 (LQQV…SAVV), 441-461 (VLWL…HFPA), 480-500 (SLTS…IDVI), and 520-540 (YWVV…CSWF).

The protein belongs to the major facilitator superfamily. Proton-dependent oligopeptide transporter (POT/PTR) (TC 2.A.17) family. As to expression, expressed in the root epidermis or cortex.

Its subcellular location is the membrane. Its function is as follows. Transporter involved in a passive nitrate efflux. This chain is Protein NRT1/ PTR FAMILY 2.5 (NPF2.5), found in Arabidopsis thaliana (Mouse-ear cress).